A 479-amino-acid chain; its full sequence is ATP synthase subunit beta (479 aa).

Glycine 168–threonine 175 serves as a coordination point for ATP.

The protein belongs to the ATPase alpha/beta chains family. In terms of assembly, F-type ATPases have 2 components, CF(1) - the catalytic core - and CF(0) - the membrane proton channel. CF(1) has five subunits: alpha(3), beta(3), gamma(1), delta(1), epsilon(1). CF(0) has three main subunits: a(1), b(2) and c(9-12). The alpha and beta chains form an alternating ring which encloses part of the gamma chain. CF(1) is attached to CF(0) by a central stalk formed by the gamma and epsilon chains, while a peripheral stalk is formed by the delta and b chains.

The protein resides in the cell membrane. It carries out the reaction ATP + H2O + 4 H(+)(in) = ADP + phosphate + 5 H(+)(out). In terms of biological role, produces ATP from ADP in the presence of a proton gradient across the membrane. The catalytic sites are hosted primarily by the beta subunits. This Frankia casuarinae (strain DSM 45818 / CECT 9043 / HFP020203 / CcI3) protein is ATP synthase subunit beta.